Reading from the N-terminus, the 478-residue chain is Protein nucleotidyltransferase YdiU (478 aa).

8 residues coordinate ATP: Gly-84, Gly-86, Arg-87, Lys-107, Asp-119, Gly-120, Arg-170, and Arg-177. The Proton acceptor role is filled by Asp-246. Mg(2+) contacts are provided by Asn-247 and Asp-256. Residue Asp-256 coordinates ATP.

This sequence belongs to the SELO family. The cofactor is Mg(2+). Mn(2+) is required as a cofactor.

It carries out the reaction L-seryl-[protein] + ATP = 3-O-(5'-adenylyl)-L-seryl-[protein] + diphosphate. The enzyme catalyses L-threonyl-[protein] + ATP = 3-O-(5'-adenylyl)-L-threonyl-[protein] + diphosphate. It catalyses the reaction L-tyrosyl-[protein] + ATP = O-(5'-adenylyl)-L-tyrosyl-[protein] + diphosphate. The catalysed reaction is L-histidyl-[protein] + UTP = N(tele)-(5'-uridylyl)-L-histidyl-[protein] + diphosphate. It carries out the reaction L-seryl-[protein] + UTP = O-(5'-uridylyl)-L-seryl-[protein] + diphosphate. The enzyme catalyses L-tyrosyl-[protein] + UTP = O-(5'-uridylyl)-L-tyrosyl-[protein] + diphosphate. In terms of biological role, nucleotidyltransferase involved in the post-translational modification of proteins. It can catalyze the addition of adenosine monophosphate (AMP) or uridine monophosphate (UMP) to a protein, resulting in modifications known as AMPylation and UMPylation. The protein is Protein nucleotidyltransferase YdiU of Escherichia coli O127:H6 (strain E2348/69 / EPEC).